A 478-amino-acid polypeptide reads, in one-letter code: Cytochrome c biogenesis protein CcsB (478 aa).

3 helical membrane passes run 30 to 50, 89 to 109, and 175 to 195; these read LRLA…GTVI, TSWF…CSLT, and FGPI…IWGS. The tract at residues 453-478 is disordered; it reads LSSPPSPAKEPPPAARVGGTESLANG. Residues 456–466 show a composition bias toward pro residues; the sequence is PPSPAKEPPPA.

Belongs to the Ccs1/CcsB family. As to quaternary structure, may interact with CcsA.

It is found in the cellular thylakoid membrane. In terms of biological role, required during biogenesis of c-type cytochromes (cytochrome c6 and cytochrome f) at the step of heme attachment. This chain is Cytochrome c biogenesis protein CcsB, found in Synechococcus sp. (strain JA-3-3Ab) (Cyanobacteria bacterium Yellowstone A-Prime).